The chain runs to 423 residues: MQQIKFIDLFSGMSGIRKGFEQACRKQSVACECVFTSEIKPAALEVLKQNYPDEVPYGDITKIETGDIPDFDILLAGFPCQAFSFAGKRLGFEDTRGTLFFDVARILKAKKPKGFILENVEGLVTHDRKDSTQKIGRTLTVILETLEALGYYVSWKVLNAKEFGIPQNRKRIYLTGSLKSKPDLSFETSPSPKLKNILESGLPTESSPFIKKLLKKFPPSELYGKSVKDKRGGKNNIHSWDIELKGAVTEEEKQLLNILLKERRKKNGLQKIGIDWMDGMPLTKAQISTFYKHPDLQNILDSLTDKGYLVLEHPKQKIGGQRIKDESLPKGYNIVSGKKSFEINKILDPNDVAPTLFAMDMEHLFVVDNGGLRTLTGKEGLRLFGYPDDYPFDIPKKDRCDLLGNTVAVPVIKAVSERLLHTL.

An SAM-dependent MTase C5-type domain is found at 4–423 (IKFIDLFSGM…AVSERLLHTL (420 aa)). C80 is a catalytic residue.

It belongs to the class I-like SAM-binding methyltransferase superfamily. C5-methyltransferase family.

It catalyses the reaction a 2'-deoxycytidine in DNA + S-adenosyl-L-methionine = a 5-methyl-2'-deoxycytidine in DNA + S-adenosyl-L-homocysteine + H(+). A methylase, recognizes the double-stranded sequence 5'-GGNNCC-3', methylates C-5 on both strands, and protects the DNA from cleavage by the NgoBV endonuclease. The protein is Type II methyltransferase M.NgoBV (ngoBVM) of Neisseria gonorrhoeae.